The chain runs to 450 residues: tRNA modification GTPase MnmE (450 aa).

Residues Arg-23, Glu-80, and Arg-123 each contribute to the (6S)-5-formyl-5,6,7,8-tetrahydrofolate site. The region spanning 219–372 (GLHVVLAGKP…LRQRLLQLAG (154 aa)) is the TrmE-type G domain. Asn-229 serves as a coordination point for K(+). GTP is bound by residues 229–234 (NVGKSS), 248–254 (TPIAGTT), 273–276 (DTAG), and 353–355 (SAR). Residue Ser-233 coordinates Mg(2+). Positions 248, 250, and 253 each coordinate K(+). Residue Thr-254 coordinates Mg(2+). Position 450 (Lys-450) interacts with (6S)-5-formyl-5,6,7,8-tetrahydrofolate.

Belongs to the TRAFAC class TrmE-Era-EngA-EngB-Septin-like GTPase superfamily. TrmE GTPase family. As to quaternary structure, homodimer. Heterotetramer of two MnmE and two MnmG subunits. K(+) serves as cofactor.

It is found in the cytoplasm. Functionally, exhibits a very high intrinsic GTPase hydrolysis rate. Involved in the addition of a carboxymethylaminomethyl (cmnm) group at the wobble position (U34) of certain tRNAs, forming tRNA-cmnm(5)s(2)U34. This Bordetella parapertussis (strain 12822 / ATCC BAA-587 / NCTC 13253) protein is tRNA modification GTPase MnmE.